A 488-amino-acid polypeptide reads, in one-letter code: UDP-N-acetylmuramate--L-alanine ligase (488 aa).

Residue 129-135 (GTHGKTT) participates in ATP binding.

The protein belongs to the MurCDEF family.

The protein localises to the cytoplasm. The enzyme catalyses UDP-N-acetyl-alpha-D-muramate + L-alanine + ATP = UDP-N-acetyl-alpha-D-muramoyl-L-alanine + ADP + phosphate + H(+). It participates in cell wall biogenesis; peptidoglycan biosynthesis. Cell wall formation. This is UDP-N-acetylmuramate--L-alanine ligase from Chromohalobacter salexigens (strain ATCC BAA-138 / DSM 3043 / CIP 106854 / NCIMB 13768 / 1H11).